Here is a 169-residue protein sequence, read N- to C-terminus: MTIQTLFAASHHIYLGNAIWYLLCFAILMLLIKHYAWGPVSDMMEKRRQKIISDLDSAASDRKKAETLANEREAALKNSRQEATQILSDAKTNAQNTSKEIVASANEDAAAIRKKANEEAAKAKSDALDAARDQVADISVAIAEKVIAKNLSAEDQKDLVDQFIKGLDD.

A helical transmembrane segment spans residues 12 to 32 (HIYLGNAIWYLLCFAILMLLI).

Belongs to the ATPase B chain family. F-type ATPases have 2 components, F(1) - the catalytic core - and F(0) - the membrane proton channel. F(1) has five subunits: alpha(3), beta(3), gamma(1), delta(1), epsilon(1). F(0) has three main subunits: a(1), b(2) and c(10-14). The alpha and beta chains form an alternating ring which encloses part of the gamma chain. F(1) is attached to F(0) by a central stalk formed by the gamma and epsilon chains, while a peripheral stalk is formed by the delta and b chains.

It is found in the cell membrane. Its activity is regulated as follows. Increases 2-fold following exposure to low pH. Functionally, f(1)F(0) ATP synthase produces ATP from ADP in the presence of a proton or sodium gradient. F-type ATPases consist of two structural domains, F(1) containing the extramembraneous catalytic core and F(0) containing the membrane proton channel, linked together by a central stalk and a peripheral stalk. During catalysis, ATP synthesis in the catalytic domain of F(1) is coupled via a rotary mechanism of the central stalk subunits to proton translocation. Component of the F(0) channel, it forms part of the peripheral stalk, linking F(1) to F(0). This is ATP synthase subunit b from Lactobacillus acidophilus (strain ATCC 700396 / NCK56 / N2 / NCFM).